A 57-amino-acid chain; its full sequence is uncharacterized protein (57 aa).

This is an uncharacterized protein from Bacillus subtilis (strain 168).